The sequence spans 73 residues: Putative defensin-like protein 57 (73 aa).

The first 25 residues, 1–25 (MRFTSMIFVLVVILINSLFNFNVLA), serve as a signal peptide directing secretion. 4 disulfides stabilise this stretch: Cys-37–Cys-71, Cys-41–Cys-64, Cys-50–Cys-69, and Cys-54–Cys-70.

This sequence belongs to the DEFL family.

The protein localises to the secreted. The protein is Putative defensin-like protein 57 of Arabidopsis thaliana (Mouse-ear cress).